A 509-amino-acid chain; its full sequence is Scavenger receptor class B member 1 (509 aa).

The Cytoplasmic portion of the chain corresponds to Met1–Ala11. The helical transmembrane segment at Ala12 to Val32 threads the bilayer. Over Pro33 to Lys439 the chain is Extracellular. N-linked (GlcNAc...) asparagine glycosylation is found at Asn102, Asn108, Asn173, Asn212, Asn255, Asn310, Asn330, and Asn383. Cys251 and Cys384 are oxidised to a cystine. A helical transmembrane segment spans residues Val440–Ile460. At Val461–Leu509 the chain is on the cytoplasmic side.

The protein belongs to the CD36 family. In terms of assembly, the C-terminal region binds to PDZK1. N-glycosylated. Post-translationally, the six cysteines of the extracellular domain are all involved in intramolecular disulfide bonds.

The protein resides in the cell membrane. Its subcellular location is the membrane. It localises to the caveola. In terms of biological role, receptor for different ligands such as phospholipids, cholesterol ester, lipoproteins, phosphatidylserine and apoptotic cells. Receptor for HDL, mediating selective uptake of cholesteryl ether and HDL-dependent cholesterol efflux. Also facilitates the flux of free and esterified cholesterol between the cell surface and apoB-containing lipoproteins and modified lipoproteins, although less efficiently than HDL. May be involved in the phagocytosis of apoptotic cells, via its phosphatidylserine binding activity. The polypeptide is Scavenger receptor class B member 1 (SCARB1) (Sus scrofa (Pig)).